The chain runs to 484 residues: Zinc metalloproteinase-disintegrin jerdonitin (484 aa).

The N-terminal stretch at 1-20 (MIQVLLVTICLAVFPYQGSS) is a signal peptide. Positions 21 to 191 (IILESGNIDD…KLSQIMIPPE (171 aa)) are excised as a propeptide. Q192 bears the Pyrrolidone carboxylic acid mark. The 199-residue stretch at 194–392 (RYIELVIVAD…FTSRCLYNEP (199 aa)) folds into the Peptidase M12B domain. E197 and D281 together coordinate Ca(2+). Cystine bridges form between C305–C387, C345–C369, and C347–C352. H330 lines the Zn(2+) pocket. E331 is an active-site residue. Positions 334 and 340 each coordinate Zn(2+). The Ca(2+) site is built by C387, N390, V402, N405, E409, E412, and D415. Residues 400 to 484 (PSVCGNYYME…AGCPRNPFHA (85 aa)) form the Disintegrin domain. Cystine bridges form between C403–C422, C414–C432, C416–C427, C426–C449, C440–C446, C445–C470, and C458–C477. Residues 462–464 (RGD) carry the Cell attachment site motif.

Belongs to the venom metalloproteinase (M12B) family. P-II subfamily. P-IIb sub-subfamily. As to quaternary structure, monomer. Zn(2+) serves as cofactor. The N-terminus is blocked. As to expression, expressed by the venom gland.

The protein localises to the secreted. Fibrinogenolytic activity is completely inhibited by EDTA, but not by PMSF. Its function is as follows. Snake venom zinc metalloproteinase that inhibits ADP-induced human platelet aggregation (IC(50)=120 nM (native) and IC(50)=248 nM (recombinant)). May act by binding to the receptor GPIIb/GPIIIa (ITGA2B/ITGB3) on the platelet surface. Degrades the alpha-chain of fibrinogen completely and the beta-chain partially, leaving the gamma chain intact. Also inhibits the growth of several cell lines, including human liver cancer cells (Bel7402), human leukemia cells (K562) and human gastric carcinoma cells (BGC823). The sequence is that of Zinc metalloproteinase-disintegrin jerdonitin from Protobothrops jerdonii (Jerdon's pitviper).